Consider the following 255-residue polypeptide: 5'-nucleotidase SurE (255 aa).

Asp-8, Asp-9, Ser-39, and Asn-95 together coordinate a divalent metal cation.

The protein belongs to the SurE nucleotidase family. Requires a divalent metal cation as cofactor.

Its subcellular location is the cytoplasm. It catalyses the reaction a ribonucleoside 5'-phosphate + H2O = a ribonucleoside + phosphate. Functionally, nucleotidase that shows phosphatase activity on nucleoside 5'-monophosphates. The protein is 5'-nucleotidase SurE of Rubrivivax gelatinosus (strain NBRC 100245 / IL144).